The primary structure comprises 1438 residues: DNA polymerase III PolC-type (1438 aa).

One can recognise an Exonuclease domain in the interval 422 to 578 (YVVFDVETTG…YDTEATAYIF (157 aa)).

The protein belongs to the DNA polymerase type-C family. PolC subfamily.

Its subcellular location is the cytoplasm. It carries out the reaction DNA(n) + a 2'-deoxyribonucleoside 5'-triphosphate = DNA(n+1) + diphosphate. Required for replicative DNA synthesis. This DNA polymerase also exhibits 3' to 5' exonuclease activity. The chain is DNA polymerase III PolC-type from Staphylococcus epidermidis (strain ATCC 35984 / DSM 28319 / BCRC 17069 / CCUG 31568 / BM 3577 / RP62A).